The primary structure comprises 380 residues: Epoxyqueuosine reductase (380 aa).

Catalysis depends on Asp139, which acts as the Proton donor. Positions 181–213 constitute a 4Fe-4S ferredoxin-type 1 domain; sequence IPFEPDDPLLDSCGDCTICVDRCPTSALVGNGQ. Residues Cys193, Cys196, Cys199, Cys203, Cys219, Cys245, Cys248, and Cys252 each coordinate [4Fe-4S] cluster. One can recognise a 4Fe-4S ferredoxin-type 2 domain in the interval 234–263; sequence YRYKIGNRLYGCDTCQQVCPKNRGINTEQD.

The protein belongs to the QueG family. In terms of assembly, monomer. The cofactor is cob(II)alamin. [4Fe-4S] cluster is required as a cofactor.

Its subcellular location is the cytoplasm. The enzyme catalyses epoxyqueuosine(34) in tRNA + AH2 = queuosine(34) in tRNA + A + H2O. The protein operates within tRNA modification; tRNA-queuosine biosynthesis. Catalyzes the conversion of epoxyqueuosine (oQ) to queuosine (Q), which is a hypermodified base found in the wobble positions of tRNA(Asp), tRNA(Asn), tRNA(His) and tRNA(Tyr). The chain is Epoxyqueuosine reductase from Staphylococcus aureus (strain NCTC 8325 / PS 47).